Here is a 473-residue protein sequence, read N- to C-terminus: Cysteine--tRNA ligase (473 aa).

Cys-28 is a binding site for Zn(2+). Positions 30–40 (VTVYDLCHLGH) match the 'HIGH' region motif. Zn(2+) is bound by residues Cys-213, His-238, and Glu-242. The short motif at 270-274 (KMSKS) is the 'KMSKS' region element. Residue Lys-273 participates in ATP binding.

The protein belongs to the class-I aminoacyl-tRNA synthetase family. As to quaternary structure, monomer. Requires Zn(2+) as cofactor.

The protein localises to the cytoplasm. It carries out the reaction tRNA(Cys) + L-cysteine + ATP = L-cysteinyl-tRNA(Cys) + AMP + diphosphate. This chain is Cysteine--tRNA ligase, found in Blochmanniella pennsylvanica (strain BPEN).